A 130-amino-acid chain; its full sequence is Small ribosomal subunit protein uS8 (130 aa).

This sequence belongs to the universal ribosomal protein uS8 family. Part of the 30S ribosomal subunit. Contacts proteins S5 and S12.

In terms of biological role, one of the primary rRNA binding proteins, it binds directly to 16S rRNA central domain where it helps coordinate assembly of the platform of the 30S subunit. The polypeptide is Small ribosomal subunit protein uS8 (Pectobacterium atrosepticum (strain SCRI 1043 / ATCC BAA-672) (Erwinia carotovora subsp. atroseptica)).